A 908-amino-acid polypeptide reads, in one-letter code: 3-phosphoinositide-dependent protein kinase B (908 aa).

3 stretches are compositionally biased toward low complexity: residues 53-170 (NNNF…SSSL), 179-189 (YSDSSDSIDSY), and 200-216 (QQQQHLQQQQDQPQPLH). Residues 53–267 (NNNFNNNNNN…PNSSIPHKKS (215 aa)) form a disordered region. The span at 250 to 262 (KTSSFGLQPNSSI) shows a compositional bias: polar residues. The Protein kinase domain occupies 271–527 (FDFIRTIGKG…ISEIKNHEFF (257 aa)). Residues 281 to 283 (AYG) and Lys-300 each bind ATP. Residues 302-346 (LNKKLIIKEKKAKYVNTEKTILDSLDNPNIVKLFYTFQDENNLYF) form a PIF-pocket region. ATP-binding positions include 349–351 (EYC) and Asp-355. Asp-394 functions as the Proton acceptor in the catalytic mechanism. ATP is bound by residues Glu-398 and Asp-412. Disordered regions lie at residues 538–560 (SQTPPPIEQMVPQSPFPSPNSSL) and 606–755 (ISNN…KNLQ). Residues 607–684 (SNNNNNNNNT…PAYSSTPSST (78 aa)) show a composition bias toward low complexity. Residues 696–709 (SSCSSNNLLGKSSN) are compositionally biased toward polar residues. Positions 710–741 (QQYQPFQFHQQQQQQQQQQQRERSSTTTPSPT) are enriched in low complexity. The PH domain occupies 764–902 (SSFSTSSPMS…KLWVDLINEL (139 aa)).

Belongs to the protein kinase superfamily. AGC Ser/Thr protein kinase family. PDPK1 subfamily.

The catalysed reaction is L-seryl-[protein] + ATP = O-phospho-L-seryl-[protein] + ADP + H(+). It carries out the reaction L-threonyl-[protein] + ATP = O-phospho-L-threonyl-[protein] + ADP + H(+). The sequence is that of 3-phosphoinositide-dependent protein kinase B (pdkB) from Dictyostelium discoideum (Social amoeba).